The primary structure comprises 40 residues: Alpha-conotoxin-like Lp1.6b (40 aa).

The propeptide occupies 1–23; sequence VVLGPASDGRNAAANNKASDLIR. A Pyrrolidone carboxylic acid modification is found at Gln-24. 2 disulfides stabilise this stretch: Cys-26/Cys-32 and Cys-27/Cys-39.

This sequence belongs to the conotoxin A superfamily. Expressed by the venom duct.

It is found in the secreted. Functionally, alpha-conotoxins act on postsynaptic membranes, they bind to the nicotinic acetylcholine receptors (nAChR) and thus inhibit them. This chain is Alpha-conotoxin-like Lp1.6b, found in Conus leopardus (Leopard cone).